The following is a 248-amino-acid chain: Trihelix transcription factor ENAP2 (248 aa).

Positions 1–13 are enriched in polar residues; sequence METTTPQSKSSVS. Residues 1–20 form a disordered region; it reads METTTPQSKSSVSHRPPLGR. The segment at residues 24–113 is a DNA-binding region (MADF); it reads WSEEATATLV…RLDVLIGPVV (90 aa). A Nuclear localization signal motif is present at residues 69-76; that stretch reads RKKTDLQC. The disordered stretch occupies residues 123–150; that stretch reads SAPFKNHLNPTGSNSTGSSLEDDDEDDD. Polar residues predominate over residues 130–141; sequence LNPTGSNSTGSS. Residues 190-210 adopt a coiled-coil conformation; it reads YERIEGKKQQMMIELEKQRME.

In terms of assembly, interacts with the Agrobacterium tumefaciens virulence protein F (VirF) in the nucleus. Binds to EIN2 C-terminal region in the presence of ethylene.

It is found in the nucleus. Its subcellular location is the nucleoplasm. In terms of biological role, probable transcription regulator. Promotes histone acetylation during ethylene signaling in an EIN2-dependent manner, thus regulating positively ethylene-responsive genes. This is Trihelix transcription factor ENAP2 from Arabidopsis thaliana (Mouse-ear cress).